The primary structure comprises 475 residues: Protein arginine N-methyltransferase 2 (475 aa).

The segment at Glu-167–Gly-194 is disordered. Acidic residues predominate over residues Leu-169–Gly-194. The region spanning Leu-247–Phe-475 is the RMT2 domain. S-adenosyl-L-methionine is bound by residues Tyr-254, Met-285, Phe-310–Ile-315, Glu-331–His-333, Trp-358–Gln-359, and Asp-378.

It belongs to the class I-like SAM-binding methyltransferase superfamily. RMT2 methyltransferase family. Monomer.

It is found in the cytoplasm. Its subcellular location is the nucleus. Its function is as follows. S-adenosyl-L-methionine-dependent protein-arginine N-methyltransferase that methylates the delta-nitrogen atom of arginine residues to form N5-methylarginine (type IV) in target proteins. Monomethylates ribosomal protein L12. The polypeptide is Protein arginine N-methyltransferase 2 (Yarrowia lipolytica (strain CLIB 122 / E 150) (Yeast)).